A 1011-amino-acid polypeptide reads, in one-letter code: Lysosomal alpha-mannosidase (1011 aa).

The N-terminal stretch at 1-49 (MGAYARASGVCARGCLDSAGPWTMSRALRPPLPPLCFFLLLLAAAGARA) is a signal peptide. Disulfide bonds link C55-C358 and C268-C273. Positions 72 and 74 each coordinate Zn(2+). N-linked (GlcNAc...) asparagine glycosylation occurs at N133. D196 contributes to the Zn(2+) binding site. Catalysis depends on D196, which acts as the Nucleophile. 2 N-linked (GlcNAc...) asparagine glycosylation sites follow: N310 and N367. Disulfide bonds link C412/C472 and C493/C501. H446 provides a ligand contact to Zn(2+). N-linked (GlcNAc...) asparagine glycosylation is found at N497, N645, N651, N692, N766, N832, N930, and N989.

Belongs to the glycosyl hydrolase 38 family. Requires Zn(2+) as cofactor. First processed into 3 peptides of 70 kDa, 42 kDa (D) and 13/15 kDa (E). The 70 kDa peptide is further processed into three peptides (A, B and C). The A, B and C peptides are disulfide-linked. In terms of processing, heavily glycosylated.

Its subcellular location is the lysosome. The enzyme catalyses Hydrolysis of terminal, non-reducing alpha-D-mannose residues in alpha-D-mannosides.. Its function is as follows. Necessary for the catabolism of N-linked carbohydrates released during glycoprotein turnover. Cleaves all known types of alpha-mannosidic linkages. The polypeptide is Lysosomal alpha-mannosidase (MAN2B1) (Homo sapiens (Human)).